A 106-amino-acid polypeptide reads, in one-letter code: UPF0145 protein Athe_0545 (106 aa).

This sequence belongs to the UPF0145 family.

The sequence is that of UPF0145 protein Athe_0545 from Caldicellulosiruptor bescii (strain ATCC BAA-1888 / DSM 6725 / KCTC 15123 / Z-1320) (Anaerocellum thermophilum).